A 168-amino-acid chain; its full sequence is Protein YciE (168 aa).

This is Protein YciE (yciE) from Escherichia coli (strain K12).